The sequence spans 138 residues: ATP synthase epsilon chain (138 aa).

This sequence belongs to the ATPase epsilon chain family. As to quaternary structure, F-type ATPases have 2 components, CF(1) - the catalytic core - and CF(0) - the membrane proton channel. CF(1) has five subunits: alpha(3), beta(3), gamma(1), delta(1), epsilon(1). CF(0) has three main subunits: a, b and c.

The protein resides in the cell inner membrane. Produces ATP from ADP in the presence of a proton gradient across the membrane. The polypeptide is ATP synthase epsilon chain (Polaromonas naphthalenivorans (strain CJ2)).